The primary structure comprises 859 residues: DNA mismatch repair protein MutS (859 aa).

617 to 624 (GPNMGGKS) contributes to the ATP binding site.

The protein belongs to the DNA mismatch repair MutS family.

Its function is as follows. This protein is involved in the repair of mismatches in DNA. It is possible that it carries out the mismatch recognition step. This protein has a weak ATPase activity. This is DNA mismatch repair protein MutS from Stutzerimonas stutzeri (strain A1501) (Pseudomonas stutzeri).